A 461-amino-acid polypeptide reads, in one-letter code: Aspartic proteinase NANA, chloroplast (461 aa).

N-linked (GlcNAc...) asparagine glycosylation is present at N86. The 351-residue stretch at 106 to 456 folds into the Peptidase A1 domain; the sequence is YFTEIRVGTP…DLMASTLSFA (351 aa). Residue D124 is part of the active site. An N-linked (GlcNAc...) asparagine glycan is attached at N274. Residue D338 is part of the active site. N386 carries an N-linked (GlcNAc...) asparagine glycan.

The protein belongs to the peptidase A1 family.

Its subcellular location is the plastid. It localises to the chloroplast. Repressed by pepstatin A. Aspartic proteinase that can use azocasein as substrate and regulates endogenous sugar levels (e.g. sucrose, glucose and fructose) by modulating starch accumulation and remobilization. Influences general morphology and development. The sequence is that of Aspartic proteinase NANA, chloroplast from Arabidopsis thaliana (Mouse-ear cress).